A 125-amino-acid polypeptide reads, in one-letter code: Large ribosomal subunit protein bL12 (125 aa).

This sequence belongs to the bacterial ribosomal protein bL12 family. Homodimer. Part of the ribosomal stalk of the 50S ribosomal subunit. Forms a multimeric L10(L12)X complex, where L10 forms an elongated spine to which 2 to 4 L12 dimers bind in a sequential fashion. Binds GTP-bound translation factors.

Forms part of the ribosomal stalk which helps the ribosome interact with GTP-bound translation factors. Is thus essential for accurate translation. This Anaeromyxobacter dehalogenans (strain 2CP-1 / ATCC BAA-258) protein is Large ribosomal subunit protein bL12.